The chain runs to 209 residues: Orotate phosphoribosyltransferase (209 aa).

Residues arginine 96, lysine 100, histidine 102, and 122–130 (EDLISTGGS) contribute to the 5-phospho-alpha-D-ribose 1-diphosphate site. Serine 126 lines the orotate pocket.

Belongs to the purine/pyrimidine phosphoribosyltransferase family. PyrE subfamily. In terms of assembly, homodimer. It depends on Mg(2+) as a cofactor.

It catalyses the reaction orotidine 5'-phosphate + diphosphate = orotate + 5-phospho-alpha-D-ribose 1-diphosphate. The protein operates within pyrimidine metabolism; UMP biosynthesis via de novo pathway; UMP from orotate: step 1/2. In terms of biological role, catalyzes the transfer of a ribosyl phosphate group from 5-phosphoribose 1-diphosphate to orotate, leading to the formation of orotidine monophosphate (OMP). In Streptococcus pyogenes serotype M12 (strain MGAS2096), this protein is Orotate phosphoribosyltransferase.